The chain runs to 57 residues: Cecropin-A (57 aa).

An N-terminal signal peptide occupies residues 1-21; that stretch reads IFFFVFACLLALSAVSAAPEP.

Belongs to the cecropin family.

The protein localises to the secreted. In terms of biological role, cecropins have lytic and antibacterial activity against several Gram-positive and Gram-negative bacteria. This chain is Cecropin-A (CECA), found in Spodoptera litura (Asian cotton leafworm).